The sequence spans 690 residues: Protein-glucosylgalactosylhydroxylysine glucosidase (690 aa).

299 to 300 (WD) contacts substrate. Residue glutamate 429 is the Proton donor of the active site. 497-498 (KQ) provides a ligand contact to substrate.

This sequence belongs to the glycosyl hydrolase 65 family.

The enzyme catalyses (5R)-5-O-[alpha-D-glucosyl-(1-&gt;2)-beta-D-galactosyl]-5-hydroxy-L-lysyl-[collagen] + H2O = (5R)-5-O-(beta-D-galactosyl)-5-hydroxy-L-lysyl-[collagen] + D-glucose. Functionally, catalyzes the hydrolysis of glucose from the disaccharide unit linked to hydroxylysine residues of collagen and collagen-like proteins. The polypeptide is Protein-glucosylgalactosylhydroxylysine glucosidase (Mus musculus (Mouse)).